The primary structure comprises 309 residues: MAFGNFDTICNITSLPLCSVVGSVNETSYFTRGIVPDCYARSVELANTMVFQIGNAFVHFGGLIILLIIIFNVRAKYTAIGRTEMLFFFYLIICLIVSSLVVDCGVSPPSSGSYAYFVAVQLGLASASCICILYNGLLCFQFWEDGSRKSMWSLRVICFCWFVVNFIVALVTFKSWDSALDSRKTMAMFVITYLINAIILAFYVISQIVLVVFALDSYWPLGAILLGVFFFVAGQVLTYEFSDDICRGASHYIDGLFFGSACNIFTVMMIYKFWDMITVDDLEFSVANVEHGVTAFGGDDEKRGSTIFS.

The next 7 membrane-spanning stretches (helical) occupy residues 51–71 (FQIG…IIIF), 86–106 (LFFF…DCGV), 114–134 (YAYF…CILY), 156–176 (VICF…FKSW), 194–214 (LINA…VVFA), 218–238 (YWPL…QVLT), and 251–271 (HYID…MMIY).

This sequence belongs to the CHS7 family. Interacts with CHS3.

Its subcellular location is the endoplasmic reticulum membrane. Chaperone required for the export of the chitin synthase CHS3 from the endoplasmic reticulum. This chain is Chitin synthase export chaperone (CHS7), found in Debaryomyces hansenii (strain ATCC 36239 / CBS 767 / BCRC 21394 / JCM 1990 / NBRC 0083 / IGC 2968) (Yeast).